We begin with the raw amino-acid sequence, 198 residues long: Probable GTP-binding protein EngB (198 aa).

An EngB-type G domain is found at 22–195; it reads HRNEVAFVGR…IDKLFLEFAT (174 aa). GTP contacts are provided by residues 30 to 37, 57 to 61, 75 to 78, 142 to 145, and 174 to 176; these read GRSNVGKS, GKTRL, DLPG, TKSD, and YSS. Positions 37 and 59 each coordinate Mg(2+).

The protein belongs to the TRAFAC class TrmE-Era-EngA-EngB-Septin-like GTPase superfamily. EngB GTPase family. Requires Mg(2+) as cofactor.

In terms of biological role, necessary for normal cell division and for the maintenance of normal septation. This is Probable GTP-binding protein EngB from Clostridium botulinum (strain Eklund 17B / Type B).